The sequence spans 248 residues: GTP cyclohydrolase 1 type 2 homolog (248 aa).

A divalent metal cation is bound by residues H64, H65, D101, H216, and E220.

Belongs to the GTP cyclohydrolase I type 2/NIF3 family. Homohexamer.

The protein is GTP cyclohydrolase 1 type 2 homolog of Borreliella burgdorferi (strain ATCC 35210 / DSM 4680 / CIP 102532 / B31) (Borrelia burgdorferi).